The following is a 754-amino-acid chain: MKNSIISYPRIGANRELKFAIEKYFKNQSSKEELLKSAKDLRIRHWQEIQKAGIDFIPSNDFSLYDNVLDAAVLFNIVHTKYKNLNLDALDEYFAQSRGYQGENGDVTALAMKKWFNTNYHYLVPECDNADIIALTGDKIFKEYLEAKELGIESKPVLIGIFTLFKLIAFKDEKTQKLAKEKLLNAYIELFDKLNELKVTWLELDEPYLVYDLSKEDIALFEEFYQELLNHKKDLKILLQSYFGDLRDIYPKLLESKFDALGLDFIEGKQSLALIQKYGFAKDKILFAGLINGKNIYANDYAKSLKLIKELQKYTQNIVLNTSCSLLHVPYSTEFESKLDSSYLKLFAFAKEKLQELKDLKEILNSSEENPLFRANQELFKNIPERLDEKVKARLKALKKEDFTRTPSFKERALIQKEFLKLPLLPTTTIGSFPQSADVRSNRLAFKQEKISAQNYTEFNQQKIKECIQIQEEIGLDVLVHGEFERNDMVEYFGENLKGFLFTQNGWVQSYGTRCVKPPVIWGDVSRTKPITLAWSKFAQSLSQKIVKGMLTGPVTILNWSFPREDISLKESTEQIALAIRDEVLDLENAGIKIIQIDEAALREKLPLRKSDWHSEYLDWAIPAFNLVHSGVKAKTQIHTHMCYSEFSDILKEIDAMDADVISFEASRSNLSLLDTLKAIRFKTEVGPGVYDIHSPRVPSVEELSLTIEKILNKLPKEQIWINPDCGLKTRAYEEVIASLKNLVTATQKIREQL.

5-methyltetrahydropteroyltri-L-glutamate-binding positions include 15 to 18 (RELK) and K114. L-homocysteine is bound by residues 430-432 (IGS) and E483. L-methionine is bound by residues 430–432 (IGS) and E483. 5-methyltetrahydropteroyltri-L-glutamate is bound by residues 514 to 515 (RC) and W560. Residue D598 coordinates L-homocysteine. D598 contacts L-methionine. Residue E604 coordinates 5-methyltetrahydropteroyltri-L-glutamate. Zn(2+) contacts are provided by H641, C643, and E665. H694 (proton donor) is an active-site residue. Residue C726 coordinates Zn(2+).

This sequence belongs to the vitamin-B12 independent methionine synthase family. Requires Zn(2+) as cofactor.

It catalyses the reaction 5-methyltetrahydropteroyltri-L-glutamate + L-homocysteine = tetrahydropteroyltri-L-glutamate + L-methionine. It participates in amino-acid biosynthesis; L-methionine biosynthesis via de novo pathway; L-methionine from L-homocysteine (MetE route): step 1/1. Its function is as follows. Catalyzes the transfer of a methyl group from 5-methyltetrahydrofolate to homocysteine resulting in methionine formation. This Campylobacter jejuni subsp. jejuni serotype O:6 (strain 81116 / NCTC 11828) protein is 5-methyltetrahydropteroyltriglutamate--homocysteine methyltransferase.